Reading from the N-terminus, the 912-residue chain is Protein translocase subunit SecA (912 aa).

ATP-binding positions include Gln87, 105 to 109 (GEGKT), and Asp508. Positions 865–912 (DEEAAQVQSGNAPLPVSQVTRDEPKVGRNDPCPCGSGKKYKHCHGQLS) are disordered. Residues Cys896, Cys898, Cys907, and His908 each coordinate Zn(2+). Residues 902–912 (KKYKHCHGQLS) are compositionally biased toward basic residues.

The protein belongs to the SecA family. Monomer and homodimer. Part of the essential Sec protein translocation apparatus which comprises SecA, SecYEG and auxiliary proteins SecDF-YajC and YidC. Requires Zn(2+) as cofactor.

The protein resides in the cell inner membrane. It is found in the cytoplasm. It catalyses the reaction ATP + H2O + cellular proteinSide 1 = ADP + phosphate + cellular proteinSide 2.. Part of the Sec protein translocase complex. Interacts with the SecYEG preprotein conducting channel. Has a central role in coupling the hydrolysis of ATP to the transfer of proteins into and across the cell membrane, serving both as a receptor for the preprotein-SecB complex and as an ATP-driven molecular motor driving the stepwise translocation of polypeptide chains across the membrane. The protein is Protein translocase subunit SecA of Xanthomonas oryzae pv. oryzae (strain PXO99A).